The chain runs to 133 residues: Hemiptericin (133 aa).

Its function is as follows. Antibacterial peptide. Affects Gram-negative bacteria. The protein is Hemiptericin of Pyrrhocoris apterus (Sap sucking bug).